The chain runs to 511 residues: Archaeal glutamate synthase [NADPH] (511 aa).

4Fe-4S ferredoxin-type domains are found at residues 15–44 (FMIE…YDEE) and 46–75 (DMMR…VKPH). [4Fe-4S] cluster contacts are provided by cysteine 24, cysteine 27, cysteine 30, cysteine 34, cysteine 55, cysteine 58, cysteine 61, and cysteine 65.

It belongs to the glutamate synthase family. FMN is required as a cofactor.

The enzyme catalyses 2 L-glutamate + NADP(+) = L-glutamine + 2-oxoglutarate + NADPH + H(+). This Archaeoglobus fulgidus (strain ATCC 49558 / DSM 4304 / JCM 9628 / NBRC 100126 / VC-16) protein is Archaeal glutamate synthase [NADPH].